The chain runs to 813 residues: Phenylalanine--tRNA ligase beta subunit (813 aa).

Residues 42-151 (AKDFNHVVIG…ADAPVGKAYA (110 aa)) form the tRNA-binding domain. The B5 domain maps to 405–480 (VKKAPVDITI…RLNGYEHIPE (76 aa)). Positions 458, 464, 467, and 468 each coordinate Mg(2+). In terms of domain architecture, FDX-ACB spans 720–813 (SKFPIVERDF…LKKNFDLSVR (94 aa)).

The protein belongs to the phenylalanyl-tRNA synthetase beta subunit family. Type 1 subfamily. In terms of assembly, tetramer of two alpha and two beta subunits. It depends on Mg(2+) as a cofactor.

It is found in the cytoplasm. It catalyses the reaction tRNA(Phe) + L-phenylalanine + ATP = L-phenylalanyl-tRNA(Phe) + AMP + diphosphate + H(+). In Bdellovibrio bacteriovorus (strain ATCC 15356 / DSM 50701 / NCIMB 9529 / HD100), this protein is Phenylalanine--tRNA ligase beta subunit.